Consider the following 294-residue polypeptide: Elongation factor Ts (294 aa).

Residues Thr79–Val82 are involved in Mg(2+) ion dislocation from EF-Tu.

Belongs to the EF-Ts family.

The protein resides in the cytoplasm. Functionally, associates with the EF-Tu.GDP complex and induces the exchange of GDP to GTP. It remains bound to the aminoacyl-tRNA.EF-Tu.GTP complex up to the GTP hydrolysis stage on the ribosome. The chain is Elongation factor Ts from Shouchella clausii (strain KSM-K16) (Alkalihalobacillus clausii).